The chain runs to 141 residues: Transmembrane protein 216 (141 aa).

Helical transmembrane passes span 15–35, 49–69, 82–102, and 115–135; these read VLFFLNGWYYATYFLLELLIF, LVLDVVMLLLYLGIEVIRLFF, LGISVALTFPSAMMASYYLLL, and SILLFFCGSELLLEMLTLATF.

Part of the tectonic-like complex (also named B9 complex). Interacts with TMEM107.

Its subcellular location is the membrane. The protein resides in the cytoplasm. It localises to the cytoskeleton. It is found in the cilium basal body. In terms of biological role, part of the tectonic-like complex which is required for tissue-specific ciliogenesis and may regulate ciliary membrane composition. This chain is Transmembrane protein 216 (Tmem216), found in Mus musculus (Mouse).